We begin with the raw amino-acid sequence, 436 residues long: Protein PhoH2 (436 aa).

Residues 12–137 (RTYVLDTSVL…LVSKDLPMRL (126 aa)) enclose the PINc domain.

This sequence in the N-terminal section; belongs to the PINc/VapC protein family. In the C-terminal section; belongs to the PhoH family.

The enzyme catalyses n ATP + n H2O + wound RNA = n ADP + n phosphate + unwound RNA.. It carries out the reaction ATP + H2O = ADP + phosphate + H(+). The catalysed reaction is GTP + H2O = GDP + phosphate + H(+). In terms of biological role, unwinds and/or cleaves 5'-tailed RNA in vitro, the reaction is maximal with hydrolyzable ATP; double-stranded (ds)RNA and dsDNA are not unwound. Unlike the protein in mycobacteria there does not seem to be an antitoxin gene upstream, suggesting this is not a toxin-antitoxin system. Has ATPase and GTPase activities. In Thermobispora bispora (strain ATCC 19993 / DSM 43833 / CBS 139.67 / JCM 10125 / KCTC 9307 / NBRC 14880 / R51), this protein is Protein PhoH2.